The sequence spans 481 residues: Zinc metalloproteinase/disintegrin (481 aa).

The first 20 residues, 1-20, serve as a signal peptide directing secretion; it reads MIEVLLVTICLAVFPYQGSS. The propeptide occupies 21–189; the sequence is IILESGNVND…KKASQLYLTP (169 aa). Glutamate 190 bears the Pyrrolidone carboxylic acid (Glu) mark. The Peptidase M12B domain maps to 197-392; sequence RYIKLAIVVD…DNPQCILNAP (196 aa). An L-amino acid tripeptide is bound at residue 296-299; that stretch reads RNTI. 3 disulfides stabilise this stretch: cysteine 308-cysteine 387, cysteine 349-cysteine 371, and cysteine 351-cysteine 354. Residue histidine 333 participates in Zn(2+) binding. The active site involves glutamate 334. Residues histidine 337 and histidine 343 each contribute to the Zn(2+) site. Serine 357 is a binding site for an L-amino acid tripeptide. A propeptide spanning residues 393–410 is cleaved from the precursor; it reads LRTDTVSTPVSGNEFLEA. Residues 400 to 481 form the Disintegrin domain; it reads TPVSGNEFLE…ADCPRNGLYG (82 aa). 6 disulfide bridges follow: cysteine 414-cysteine 429, cysteine 416-cysteine 424, cysteine 423-cysteine 446, cysteine 437-cysteine 443, cysteine 442-cysteine 467, and cysteine 455-cysteine 474. Residues 459–461 carry the Cell attachment site motif; it reads RGD.

It belongs to the venom metalloproteinase (M12B) family. P-II subfamily. P-IIa sub-subfamily. Monomer. Requires Zn(2+) as cofactor. In terms of processing, the N-terminus is blocked. As to expression, expressed by the venom gland.

It localises to the secreted. Inhibited by EDTA and 1,10-phenanthroline. Is also inhibited by endogenous tripeptide inhibitors pyroGlu-Asn-Trp, pyroGlu-Gln-Trp, and pyroGlu-Lys-Trp. In terms of biological role, potent fibrinogenolytic protease which cleaves mainly the Aalpha chain of fibrinogen (FGA) and slightly the Bbeta (FGB) and the gamma (FGG) chains. May possess hemorrhagic activity. Compared to other SVMP, the substrate-binding pocket is relatively shallow. Is less susceptible to tripeptide inhibitors than TM-1 (AC U3KRG1) and TM-2. Inhibits platelet aggregation induced by ADP, thrombin, platelet-activating factor and collagen. Acts by inhibiting fibrinogen interaction with platelet receptors GPIIb/GPIIIa (ITGA2B/ITGB3). This chain is Zinc metalloproteinase/disintegrin, found in Protobothrops mucrosquamatus (Taiwan habu).